The chain runs to 455 residues: D-arabinitol 4-dehydrogenase (455 aa).

Belongs to the mannitol dehydrogenase family. In terms of assembly, monomer.

The enzyme catalyses D-arabinitol + NAD(+) = D-xylulose + NADH + H(+). Its pathway is carbohydrate metabolism; D-arabinitol metabolism. The chain is D-arabinitol 4-dehydrogenase (dalD) from Klebsiella pneumoniae.